Reading from the N-terminus, the 333-residue chain is Ornithine carbamoyltransferase (333 aa).

Carbamoyl phosphate-binding positions include 56-59 (STRT), Gln83, Arg107, and 134-137 (HPTQ). Residues Asn167, Asp231, and 235-236 (SM) each bind L-ornithine. Carbamoyl phosphate-binding positions include 273 to 274 (CL) and Arg318.

This sequence belongs to the aspartate/ornithine carbamoyltransferase superfamily. OTCase family.

The protein localises to the cytoplasm. The catalysed reaction is carbamoyl phosphate + L-ornithine = L-citrulline + phosphate + H(+). The protein operates within amino-acid biosynthesis; L-arginine biosynthesis; L-arginine from L-ornithine and carbamoyl phosphate: step 1/3. Its function is as follows. Reversibly catalyzes the transfer of the carbamoyl group from carbamoyl phosphate (CP) to the N(epsilon) atom of ornithine (ORN) to produce L-citrulline. The chain is Ornithine carbamoyltransferase from Staphylococcus aureus (strain MSSA476).